The sequence spans 908 residues: Protein translocase subunit SecA (908 aa).

ATP is bound by residues Gln-87, 105-109 (GEGKT), and Asp-512. The tract at residues 865–908 (GGDDGSDEMMAHTPMIRDGDKVGRNDPCPCGSGRKYKQCHGKLS) is disordered. The segment covering 879–888 (MIRDGDKVGR) has biased composition (basic and acidic residues). Zn(2+) contacts are provided by Cys-892, Cys-894, Cys-903, and His-904. Residues 898-908 (RKYKQCHGKLS) show a composition bias toward basic residues.

This sequence belongs to the SecA family. Monomer and homodimer. Part of the essential Sec protein translocation apparatus which comprises SecA, SecYEG and auxiliary proteins SecDF-YajC and YidC. The cofactor is Zn(2+).

It localises to the cell inner membrane. The protein resides in the cytoplasm. It catalyses the reaction ATP + H2O + cellular proteinSide 1 = ADP + phosphate + cellular proteinSide 2.. In terms of biological role, part of the Sec protein translocase complex. Interacts with the SecYEG preprotein conducting channel. Has a central role in coupling the hydrolysis of ATP to the transfer of proteins into and across the cell membrane, serving both as a receptor for the preprotein-SecB complex and as an ATP-driven molecular motor driving the stepwise translocation of polypeptide chains across the membrane. The chain is Protein translocase subunit SecA from Shewanella sp. (strain MR-4).